The following is a 354-amino-acid chain: Divinyl chlorophyll a/b light-harvesting protein PcbF (354 aa).

6 consecutive transmembrane segments (helical) span residues 27–47, 88–108, 140–160, 201–221, 248–268, and 315–335; these read FIASHAAHTGMIAFGAGSNTL, VVTLAILHLILSMVYGAGGLL, FILGHHLILFGLACAWFVEWA, VMGGHAFLAFAEITGGCFHAI, AILSFSLAGIGWMAIVAAFWC, and TANFHYIAGFFAFQGHLWHAL.

It belongs to the PsbB/PsbC family. IsiA/Pcb subfamily. The antenna complex consists of divinyl chlorophylls (a and b) and divinyl chlorophyll a/b binding proteins and binds more divinyl chlorophyll b than does the antenna complex from high-light-adapted Prochlorococcus. Requires divinyl chlorophyll a as cofactor. Divinyl chlorophyll b serves as cofactor.

The protein localises to the cellular thylakoid membrane. Its function is as follows. The antenna complex functions as a light receptor, it captures and delivers excitation energy to photosystems II and I. The Prochlorales pcb genes are not related to higher plant LHCs. This Prochlorococcus marinus (strain SARG / CCMP1375 / SS120) protein is Divinyl chlorophyll a/b light-harvesting protein PcbF (pcbF).